We begin with the raw amino-acid sequence, 171 residues long: Peptide deformylase (171 aa).

Fe cation is bound by residues cysteine 92 and histidine 134. Residue glutamate 135 is part of the active site. Histidine 138 provides a ligand contact to Fe cation.

The protein belongs to the polypeptide deformylase family. Fe(2+) is required as a cofactor.

The catalysed reaction is N-terminal N-formyl-L-methionyl-[peptide] + H2O = N-terminal L-methionyl-[peptide] + formate. In terms of biological role, removes the formyl group from the N-terminal Met of newly synthesized proteins. Requires at least a dipeptide for an efficient rate of reaction. N-terminal L-methionine is a prerequisite for activity but the enzyme has broad specificity at other positions. The protein is Peptide deformylase of Polynucleobacter necessarius subsp. necessarius (strain STIR1).